Consider the following 129-residue polypeptide: Glycine cleavage system H protein (129 aa).

The Lipoyl-binding domain occupies 24–106; that stretch reads SYTVGITEHA…YGEGWFFRVM (83 aa). N6-lipoyllysine is present on lysine 65.

This sequence belongs to the GcvH family. As to quaternary structure, the glycine cleavage system is composed of four proteins: P, T, L and H. The cofactor is (R)-lipoate.

Its function is as follows. The glycine cleavage system catalyzes the degradation of glycine. The H protein shuttles the methylamine group of glycine from the P protein to the T protein. The protein is Glycine cleavage system H protein of Shewanella baltica (strain OS185).